Reading from the N-terminus, the 245-residue chain is Eukaryotic translation initiation factor 6 (245 aa).

Y113 is modified (phosphotyrosine). T165 bears the Phosphothreonine mark. S166 is subject to Phosphoserine. Residues S174 and S175 each carry the phosphoserine; by CK1 modification. S235 is subject to Phosphoserine; by PKC. Phosphoserine occurs at positions 239 and 243.

Belongs to the eIF-6 family. As to quaternary structure, monomer. Associates with the 60S ribosomal subunit. Interacts with RACK1. Interacts with DICER1, AGO2, TARBP2, MOV10 and RPL7A; they form a large RNA-induced silencing complex (RISC). Post-translationally, phosphorylation at Ser-174 and Ser-175 by CSNK1D/CK1 promotes nuclear export. In terms of processing, ufmylated by UFL1. As to expression, expressed at very high levels in colon carcinoma with lower levels in normal colon and ileum and lowest levels in kidney and muscle (at protein level).

Its subcellular location is the cytoplasm. The protein localises to the nucleus. It localises to the nucleolus. Functionally, binds to the 60S ribosomal subunit and prevents its association with the 40S ribosomal subunit to form the 80S initiation complex in the cytoplasm. Behaves as a stimulatory translation initiation factor downstream insulin/growth factors. Is also involved in ribosome biogenesis. Associates with pre-60S subunits in the nucleus and is involved in its nuclear export. Cytoplasmic release of TIF6 from 60S subunits and nuclear relocalization is promoted by a RACK1 (RACK1)-dependent protein kinase C activity. In tissues responsive to insulin, controls fatty acid synthesis and glycolysis by exerting translational control of adipogenic transcription factors such as CEBPB, CEBPD and ATF4 that have G/C rich or uORF in their 5'UTR. Required for ROS-dependent megakaryocyte maturation and platelets formation, controls the expression of mitochondrial respiratory chain genes involved in reactive oxygen species (ROS) synthesis. Involved in miRNA-mediated gene silencing by the RNA-induced silencing complex (RISC). Required for both miRNA-mediated translational repression and miRNA-mediated cleavage of complementary mRNAs by RISC. Modulates cell cycle progression and global translation of pre-B cells, its activation seems to be rate-limiting in tumorigenesis and tumor growth. This is Eukaryotic translation initiation factor 6 from Homo sapiens (Human).